The chain runs to 391 residues: Glycerol-3-phosphate dehydrogenase [NAD(+)] 1 (391 aa).

Residues Gly41–Gly46, Phe129, Lys152, and Ala185 contribute to the NAD(+) site. Residue Lys152 participates in substrate binding. The Proton acceptor role is filled by Lys245. The NAD(+) site is built by Arg310 and Gln339. Substrate is bound at residue Arg310–Asn311.

Belongs to the NAD-dependent glycerol-3-phosphate dehydrogenase family.

It is found in the cytoplasm. The catalysed reaction is sn-glycerol 3-phosphate + NAD(+) = dihydroxyacetone phosphate + NADH + H(+). The protein is Glycerol-3-phosphate dehydrogenase [NAD(+)] 1 (GPD1) of Saccharomyces uvarum (Yeast).